Here is a 123-residue protein sequence, read N- to C-terminus: Small ribosomal subunit protein uS13 (123 aa).

This sequence belongs to the universal ribosomal protein uS13 family. In terms of assembly, part of the 30S ribosomal subunit. Forms a loose heterodimer with protein S19. Forms two bridges to the 50S subunit in the 70S ribosome.

Located at the top of the head of the 30S subunit, it contacts several helices of the 16S rRNA. In the 70S ribosome it contacts the 23S rRNA (bridge B1a) and protein L5 of the 50S subunit (bridge B1b), connecting the 2 subunits; these bridges are implicated in subunit movement. Contacts the tRNAs in the A and P-sites. The polypeptide is Small ribosomal subunit protein uS13 (Neorickettsia sennetsu (strain ATCC VR-367 / Miyayama) (Ehrlichia sennetsu)).